Reading from the N-terminus, the 477-residue chain is UDP-N-acetylmuramate--L-alanine ligase (477 aa).

Position 122 to 128 (Gly122 to Thr128) interacts with ATP.

It belongs to the MurCDEF family.

It localises to the cytoplasm. The enzyme catalyses UDP-N-acetyl-alpha-D-muramate + L-alanine + ATP = UDP-N-acetyl-alpha-D-muramoyl-L-alanine + ADP + phosphate + H(+). It functions in the pathway cell wall biogenesis; peptidoglycan biosynthesis. Its function is as follows. Cell wall formation. The sequence is that of UDP-N-acetylmuramate--L-alanine ligase from Xanthomonas euvesicatoria pv. vesicatoria (strain 85-10) (Xanthomonas campestris pv. vesicatoria).